The chain runs to 1395 residues: DNA polymerase II large subunit (1395 aa).

Disordered regions lie at residues 279–320 and 657–704; these read IGKD…PRVE and GNRM…MSDT. Residues 283–312 show a composition bias toward acidic residues; the sequence is EADEGDSAEDANGDDAGEGADDDGGDEADE. 2 stretches are compositionally biased toward basic and acidic residues: residues 661–671 and 690–700; these read GRPEKSERRDL and DVAKATKHADD.

Belongs to the archaeal DNA polymerase II family. Heterodimer of a large subunit and a small subunit. This protein undergoes a protein self splicing that involves a post-translational excision of the intervening region (intein) followed by peptide ligation.

It catalyses the reaction DNA(n) + a 2'-deoxyribonucleoside 5'-triphosphate = DNA(n+1) + diphosphate. The enzyme catalyses Exonucleolytic cleavage in the 3'- to 5'-direction to yield nucleoside 5'-phosphates.. Possesses two activities: a DNA synthesis (polymerase) and an exonucleolytic activity that degrades single-stranded DNA in the 3'- to 5'-direction. Has a template-primer preference which is characteristic of a replicative DNA polymerase. The chain is DNA polymerase II large subunit from Haloarcula marismortui (strain ATCC 43049 / DSM 3752 / JCM 8966 / VKM B-1809) (Halobacterium marismortui).